The following is a 429-amino-acid chain: Argininosuccinate lyase (429 aa).

Belongs to the lyase 1 family. Argininosuccinate lyase subfamily.

It localises to the cytoplasm. It carries out the reaction 2-(N(omega)-L-arginino)succinate = fumarate + L-arginine. It participates in amino-acid biosynthesis; L-arginine biosynthesis; L-arginine from L-ornithine and carbamoyl phosphate: step 3/3. This is Argininosuccinate lyase from Pyrobaculum arsenaticum (strain DSM 13514 / JCM 11321 / PZ6).